Reading from the N-terminus, the 313-residue chain is MSFSTIVKDELCRIELHDECCMKSEILGVILIGNLFSNEKILRNTKVVTENAAFARRIYSIFRRIYGICPEVSIRRSSKLKKHVSYSLTLVPNQMINKILYDFGISAFTEDEYIPAASTLEKVCCRKSFLRAAFLSGGSISDPEKTYHLEISTHNIMSAEMIKDLLDDYNINTKIIKRKGSYVAYIKEGEQIVDFLNIIGAHGALMELENVRILKDMRNNVNRIVNCETANLEKTVNASIRQIENIKYIESTIGIDKLPENLVEIADVRVQFRDASLKELGEMLHPKLGKSGVNHRLRKLDEIAERIRKNNQR.

The H-T-H motif DNA-binding region spans 276–309 (SLKELGEMLHPKLGKSGVNHRLRKLDEIAERIRK).

It belongs to the WhiA family.

Functionally, involved in cell division and chromosome segregation. This Ruminiclostridium cellulolyticum (strain ATCC 35319 / DSM 5812 / JCM 6584 / H10) (Clostridium cellulolyticum) protein is Probable cell division protein WhiA.